The following is a 112-amino-acid chain: UPF0251 protein MA_4245 (112 aa).

It belongs to the UPF0251 family.

In Methanosarcina acetivorans (strain ATCC 35395 / DSM 2834 / JCM 12185 / C2A), this protein is UPF0251 protein MA_4245.